Reading from the N-terminus, the 408-residue chain is NADH-quinone oxidoreductase subunit D (408 aa).

It belongs to the complex I 49 kDa subunit family. In terms of assembly, NDH-1 is composed of 14 different subunits. Subunits NuoB, C, D, E, F, and G constitute the peripheral sector of the complex.

It localises to the cell inner membrane. The enzyme catalyses a quinone + NADH + 5 H(+)(in) = a quinol + NAD(+) + 4 H(+)(out). In terms of biological role, NDH-1 shuttles electrons from NADH, via FMN and iron-sulfur (Fe-S) centers, to quinones in the respiratory chain. The immediate electron acceptor for the enzyme in this species is believed to be ubiquinone. Couples the redox reaction to proton translocation (for every two electrons transferred, four hydrogen ions are translocated across the cytoplasmic membrane), and thus conserves the redox energy in a proton gradient. The polypeptide is NADH-quinone oxidoreductase subunit D (Campylobacter jejuni subsp. jejuni serotype O:23/36 (strain 81-176)).